Here is a 606-residue protein sequence, read N- to C-terminus: Homeobox protein B-H1 (606 aa).

The span at M1–E14 shows a compositional bias: polar residues. Disordered stretches follow at residues M1–A65, Y104–A188, A261–D340, and A508–V606. Positions Q21–L40 are enriched in basic residues. Low complexity predominate over residues Q41 to A65. Positions Q108 to H118 are enriched in basic residues. Positions H119–N138 are enriched in low complexity. Residues H166–A188 are compositionally biased toward basic residues. A compositionally biased stretch (acidic residues) spans E266 to E284. Over residues G286 to S295 the composition is skewed to gly residues. The segment covering H297–N314 has biased composition (basic and acidic residues). A compositionally biased stretch (polar residues) spans S315–S325. Residues Q331–T390 constitute a DNA-binding region (homeobox). Residues G513–S522 are compositionally biased toward pro residues. Residues S523–P534 show a composition bias toward low complexity. Over residues A561–P576 the composition is skewed to pro residues.

This sequence belongs to the Antp homeobox family. In terms of tissue distribution, abundant in the eye-antenna imaginal disk.

It localises to the nucleus. In terms of biological role, functionally required in R1 and R6 receptor cells and primary pigment cells for normal eye development. In Drosophila ananassae (Fruit fly), this protein is Homeobox protein B-H1 (B-H1).